A 354-amino-acid chain; its full sequence is MVAIAPNPHSGQSVKTIRENLLTPRFYTTDFEQAAKLDLSRQQEQLEAMLAEMRADYNRHHFVRDDSFKGTWDLLDAQTRKAFIDYLERSCVSEFSGFLLFKELSRKLKDRNPLLAEIFHLMARDEARHAGFLNKAMMDFGHAMDLGYLSKTRTYTFFPLPWVLYTVYLSEKIGYWRYIIIYRHLEKHPEHSFYPLFNYFERWCQDENRHGDIFKALIHSQPQLIQGWGAKLWMRFFLLTVFATHTLTVHERAKFYEALGLDATAFDREVIAKTNETAARTFSVVLNVDHPEFYSRLQRCVEISNKLQAIEATHQPKWLKALRKLPHQLAIAGHLLRIYLLPPVNAQQEWGTVH.

It belongs to the AcsF family. It depends on Fe cation as a cofactor.

The enzyme catalyses Mg-protoporphyrin IX 13-monomethyl ester + 3 NADPH + 3 O2 + 2 H(+) = 3,8-divinyl protochlorophyllide a + 3 NADP(+) + 5 H2O. It functions in the pathway porphyrin-containing compound metabolism; chlorophyll biosynthesis (light-independent). In terms of biological role, catalyzes the formation of the isocyclic ring in chlorophyll biosynthesis. Mediates the cyclase reaction, which results in the formation of divinylprotochlorophyllide (Pchlide) characteristic of all chlorophylls from magnesium-protoporphyrin IX 13-monomethyl ester (MgPMME). The sequence is that of Magnesium-protoporphyrin IX monomethyl ester [oxidative] cyclase 2 from Thermosynechococcus vestitus (strain NIES-2133 / IAM M-273 / BP-1).